A 144-amino-acid polypeptide reads, in one-letter code: Large ribosomal subunit protein uL13 (144 aa).

The protein belongs to the universal ribosomal protein uL13 family. As to quaternary structure, part of the 50S ribosomal subunit.

Its function is as follows. This protein is one of the early assembly proteins of the 50S ribosomal subunit, although it is not seen to bind rRNA by itself. It is important during the early stages of 50S assembly. This is Large ribosomal subunit protein uL13 from Natronomonas pharaonis (strain ATCC 35678 / DSM 2160 / CIP 103997 / JCM 8858 / NBRC 14720 / NCIMB 2260 / Gabara) (Halobacterium pharaonis).